A 270-amino-acid chain; its full sequence is Small ribosomal subunit protein uS2 (270 aa).

A compositionally biased stretch (acidic residues) spans 207–225 (EEPENTEEAAEEAATEEVV). The disordered stretch occupies residues 207 to 270 (EEPENTEEAA…SESAPAPVAA (64 aa)). The span at 226–258 (ETAAAEAAAATNADNWDVAPDAGAGAADWAATD) shows a compositional bias: low complexity.

The protein belongs to the universal ribosomal protein uS2 family. As to quaternary structure, component of the small ribosomal subunit. Mature ribosomes consist of a small (40S) and a large (60S) subunit. The 40S subunit contains about 33 different proteins and 1 molecule of RNA (18S). The 60S subunit contains about 49 different proteins and 3 molecules of RNA (25S, 5.8S and 5S). Interacts with RPS21.

It is found in the cytoplasm. Required for the assembly and/or stability of the 40S ribosomal subunit. Required for the processing of the 20S rRNA-precursor to mature 18S rRNA in a late step of the maturation of 40S ribosomal subunits. The protein is Small ribosomal subunit protein uS2 of Yarrowia lipolytica (strain CLIB 122 / E 150) (Yeast).